We begin with the raw amino-acid sequence, 177 residues long: Large ribosomal subunit protein uL6 (177 aa).

Belongs to the universal ribosomal protein uL6 family. Part of the 50S ribosomal subunit.

Functionally, this protein binds to the 23S rRNA, and is important in its secondary structure. It is located near the subunit interface in the base of the L7/L12 stalk, and near the tRNA binding site of the peptidyltransferase center. This chain is Large ribosomal subunit protein uL6, found in Rickettsia bellii (strain OSU 85-389).